Reading from the N-terminus, the 509-residue chain is Maturase K (509 aa).

Belongs to the intron maturase 2 family. MatK subfamily.

Its subcellular location is the plastid. It localises to the chloroplast. Usually encoded in the trnK tRNA gene intron. Probably assists in splicing its own and other chloroplast group II introns. The protein is Maturase K of Clematis ligusticifolia (Western white clematis).